Consider the following 288-residue polypeptide: Lipoyl synthase (288 aa).

[4Fe-4S] cluster is bound by residues Cys39, Cys44, Cys50, Cys65, Cys69, Cys72, and Ser276. Residues 51–265 (WGKGTATFMI…KETGLKKGFE (215 aa)) enclose the Radical SAM core domain.

Belongs to the radical SAM superfamily. Lipoyl synthase family. [4Fe-4S] cluster is required as a cofactor.

It is found in the cytoplasm. It catalyses the reaction [[Fe-S] cluster scaffold protein carrying a second [4Fe-4S](2+) cluster] + N(6)-octanoyl-L-lysyl-[protein] + 2 oxidized [2Fe-2S]-[ferredoxin] + 2 S-adenosyl-L-methionine + 4 H(+) = [[Fe-S] cluster scaffold protein] + N(6)-[(R)-dihydrolipoyl]-L-lysyl-[protein] + 4 Fe(3+) + 2 hydrogen sulfide + 2 5'-deoxyadenosine + 2 L-methionine + 2 reduced [2Fe-2S]-[ferredoxin]. The protein operates within protein modification; protein lipoylation via endogenous pathway; protein N(6)-(lipoyl)lysine from octanoyl-[acyl-carrier-protein]: step 2/2. Its function is as follows. Catalyzes the radical-mediated insertion of two sulfur atoms into the C-6 and C-8 positions of the octanoyl moiety bound to the lipoyl domains of lipoate-dependent enzymes, thereby converting the octanoylated domains into lipoylated derivatives. The protein is Lipoyl synthase of Bacteroides fragilis (strain ATCC 25285 / DSM 2151 / CCUG 4856 / JCM 11019 / LMG 10263 / NCTC 9343 / Onslow / VPI 2553 / EN-2).